The primary structure comprises 226 residues: Gap junction beta-2 protein (226 aa).

Residues 2–13 (DWGALQTILGGV) lie within the membrane without spanning it. Residues 14 to 20 (NKHSTSI) lie on the Cytoplasmic side of the membrane. The helical transmembrane segment at 21–40 (GKIWLTVLFIFRIMILVVAA) threads the bilayer. The Extracellular segment spans residues 41 to 73 (KEVWGDEQADFVCNTLQPGCKNVCYDHYFPISH). Residues Glu42, Gly45, and Glu47 each coordinate Ca(2+). Cystine bridges form between Cys53–Cys180, Cys60–Cys174, and Cys64–Cys169. The chain crosses the membrane as a helical span at residues 74-94 (IRLWALQLIFVSTPALLVAMH). The Cytoplasmic segment spans residues 95-135 (VAYRRHEKKRKFIKGEIKSEFKDIEEIKTQKVRIEGSLWWT). Residues 136 to 156 (YTSSIFFRVIFEAAFMYVFYV) form a helical membrane-spanning segment. The Extracellular portion of the chain corresponds to 157–189 (MYDGFSMQRLVKCNAWPCPNTVDCFVSRPTEKT). Residues 190 to 210 (VFTVFMIAVSGICILLNVTEL) traverse the membrane as a helical segment. Residues 211 to 226 (CYLLIRYCSGRSKKPV) are Cytoplasmic-facing.

It belongs to the connexin family. Beta-type (group I) subfamily. As to quaternary structure, a hemichannel or connexon is composed of a hexamer of connexins. A functional gap junction is formed by the apposition of two hemichannels. Forms heteromeric channels with GJB4. Interacts with CNST.

The protein resides in the cell membrane. It localises to the cell junction. The protein localises to the gap junction. Structural component of gap junctions. Gap junctions are dodecameric channels that connect the cytoplasm of adjoining cells. They are formed by the docking of two hexameric hemichannels, one from each cell membrane. Small molecules and ions diffuse from one cell to a neighboring cell via the central pore. The polypeptide is Gap junction beta-2 protein (GJB2) (Pongo pygmaeus (Bornean orangutan)).